The following is a 550-amino-acid chain: Methionine--tRNA ligase (550 aa).

A 'HIGH' region motif is present at residues 13–23 (PYANGEIHLGH). 4 residues coordinate Zn(2+): C144, C147, C157, and C160. The 'KMSKS' region signature appears at 329 to 333 (KMSKS). K332 provides a ligand contact to ATP.

This sequence belongs to the class-I aminoacyl-tRNA synthetase family. MetG type 1 subfamily. As to quaternary structure, monomer. Requires Zn(2+) as cofactor.

Its subcellular location is the cytoplasm. The enzyme catalyses tRNA(Met) + L-methionine + ATP = L-methionyl-tRNA(Met) + AMP + diphosphate. Is required not only for elongation of protein synthesis but also for the initiation of all mRNA translation through initiator tRNA(fMet) aminoacylation. In Ruthia magnifica subsp. Calyptogena magnifica, this protein is Methionine--tRNA ligase.